Consider the following 417-residue polypeptide: Glutamyl-tRNA(Gln) amidotransferase subunit D (417 aa).

The Asparaginase/glutaminase domain occupies 73–400 (EKVWLLATGG…EEVPRVLTTP (328 aa)). Active-site residues include Thr-83, Thr-157, Asp-158, and Lys-236.

The protein belongs to the asparaginase 1 family. GatD subfamily. Heterodimer of GatD and GatE.

It carries out the reaction L-glutamyl-tRNA(Gln) + L-glutamine + ATP + H2O = L-glutaminyl-tRNA(Gln) + L-glutamate + ADP + phosphate + H(+). In terms of biological role, allows the formation of correctly charged Gln-tRNA(Gln) through the transamidation of misacylated Glu-tRNA(Gln) in organisms which lack glutaminyl-tRNA synthetase. The reaction takes place in the presence of glutamine and ATP through an activated gamma-phospho-Glu-tRNA(Gln). The GatDE system is specific for glutamate and does not act on aspartate. The sequence is that of Glutamyl-tRNA(Gln) amidotransferase subunit D from Pyrobaculum aerophilum (strain ATCC 51768 / DSM 7523 / JCM 9630 / CIP 104966 / NBRC 100827 / IM2).